A 95-amino-acid chain; its full sequence is Small ribosomal subunit protein bS18 (95 aa).

It belongs to the bacterial ribosomal protein bS18 family. Part of the 30S ribosomal subunit. Forms a tight heterodimer with protein bS6.

Its function is as follows. Binds as a heterodimer with protein bS6 to the central domain of the 16S rRNA, where it helps stabilize the platform of the 30S subunit. In Ehrlichia ruminantium (strain Gardel), this protein is Small ribosomal subunit protein bS18.